A 310-amino-acid chain; its full sequence is Ribosomal RNA small subunit methyltransferase H (310 aa).

S-adenosyl-L-methionine is bound by residues 32 to 34, aspartate 52, phenylalanine 79, aspartate 100, and glutamine 107; that span reads GGH.

It belongs to the methyltransferase superfamily. RsmH family.

Its subcellular location is the cytoplasm. The enzyme catalyses cytidine(1402) in 16S rRNA + S-adenosyl-L-methionine = N(4)-methylcytidine(1402) in 16S rRNA + S-adenosyl-L-homocysteine + H(+). In terms of biological role, specifically methylates the N4 position of cytidine in position 1402 (C1402) of 16S rRNA. This chain is Ribosomal RNA small subunit methyltransferase H, found in Bacillus cereus (strain G9842).